We begin with the raw amino-acid sequence, 73 residues long: Putative membrane protein insertion efficiency factor (73 aa).

Belongs to the UPF0161 family.

The protein resides in the cell inner membrane. In terms of biological role, could be involved in insertion of integral membrane proteins into the membrane. This chain is Putative membrane protein insertion efficiency factor, found in Rickettsia bellii (strain OSU 85-389).